The chain runs to 261 residues: Putative outer membrane protein TC_0650 (261 aa).

The signal sequence occupies residues 1-17 (MRFLFAFILLCSPWVSE).

It is found in the cell outer membrane. The chain is Putative outer membrane protein TC_0650 from Chlamydia muridarum (strain MoPn / Nigg).